The sequence spans 377 residues: S-adenosylmethionine synthase (377 aa).

His14 provides a ligand contact to ATP. Asp16 serves as a coordination point for Mg(2+). Glu42 contributes to the K(+) binding site. Gln98 is a binding site for L-methionine. A flexible loop region spans residues 98-108; sequence QSADIALGIDL. ATP-binding positions include 162–164, 228–229, Asp237, 243–244, Ala260, and Lys264; these read DMK, RF, and RK. Asp237 provides a ligand contact to L-methionine. Lys268 is a binding site for L-methionine.

Belongs to the AdoMet synthase family. As to quaternary structure, homotetramer; dimer of dimers. The cofactor is Mg(2+). It depends on K(+) as a cofactor.

The protein resides in the cytoplasm. The enzyme catalyses L-methionine + ATP + H2O = S-adenosyl-L-methionine + phosphate + diphosphate. It participates in amino-acid biosynthesis; S-adenosyl-L-methionine biosynthesis; S-adenosyl-L-methionine from L-methionine: step 1/1. Its function is as follows. Catalyzes the formation of S-adenosylmethionine (AdoMet) from methionine and ATP. The overall synthetic reaction is composed of two sequential steps, AdoMet formation and the subsequent tripolyphosphate hydrolysis which occurs prior to release of AdoMet from the enzyme. The sequence is that of S-adenosylmethionine synthase from Mesoplasma florum (strain ATCC 33453 / NBRC 100688 / NCTC 11704 / L1) (Acholeplasma florum).